A 132-amino-acid chain; its full sequence is ATP synthase epsilon chain (132 aa).

The protein belongs to the ATPase epsilon chain family. As to quaternary structure, F-type ATPases have 2 components, CF(1) - the catalytic core - and CF(0) - the membrane proton channel. CF(1) has five subunits: alpha(3), beta(3), gamma(1), delta(1), epsilon(1). CF(0) has three main subunits: a, b and c.

It localises to the cell membrane. In terms of biological role, produces ATP from ADP in the presence of a proton gradient across the membrane. In Bacillus caldotenax, this protein is ATP synthase epsilon chain (atpC).